The sequence spans 441 residues: ATP-dependent protease ATPase subunit HslU (441 aa).

Residues isoleucine 18, 60–65 (GVGKTE), aspartate 254, glutamate 319, and arginine 391 each bind ATP.

The protein belongs to the ClpX chaperone family. HslU subfamily. In terms of assembly, a double ring-shaped homohexamer of HslV is capped on each side by a ring-shaped HslU homohexamer. The assembly of the HslU/HslV complex is dependent on binding of ATP.

Its subcellular location is the cytoplasm. ATPase subunit of a proteasome-like degradation complex; this subunit has chaperone activity. The binding of ATP and its subsequent hydrolysis by HslU are essential for unfolding of protein substrates subsequently hydrolyzed by HslV. HslU recognizes the N-terminal part of its protein substrates and unfolds these before they are guided to HslV for hydrolysis. The sequence is that of ATP-dependent protease ATPase subunit HslU from Shewanella loihica (strain ATCC BAA-1088 / PV-4).